The primary structure comprises 325 residues: GMP reductase (325 aa).

C173 functions as the Thioimidate intermediate in the catalytic mechanism. Residue 202-225 participates in NADP(+) binding; sequence IIADGGIRSHGDIAKSVRFGATMV.

This sequence belongs to the IMPDH/GMPR family. GuaC type 2 subfamily.

The enzyme catalyses IMP + NH4(+) + NADP(+) = GMP + NADPH + 2 H(+). In terms of biological role, catalyzes the irreversible NADPH-dependent deamination of GMP to IMP. It functions in the conversion of nucleobase, nucleoside and nucleotide derivatives of G to A nucleotides, and in maintaining the intracellular balance of A and G nucleotides. The sequence is that of GMP reductase from Acidovorax sp. (strain JS42).